The sequence spans 1284 residues: Neuronal cell adhesion molecule (1284 aa).

The first 24 residues, 1 to 24, serve as a signal peptide directing secretion; it reads MMKEKSISASKASLVFFLCQMISA. Residues 25-1143 lie on the Extracellular side of the membrane; the sequence is LDVPLDSKLL…ASRQVDIATQ (1119 aa). Ig-like C2-type domains are found at residues 41–129, 136–230, 243–332, 337–424, 430–517, and 521–608; these read PTIT…AAIS, PSRS…QPIS, PPVL…ISVT, PYWI…AFVN, PRIL…VQLE, and PTMI…AVLT. Cystine bridges form between Cys-63-Cys-118 and Cys-162-Cys-213. The N-linked (GlcNAc...) asparagine glycan is linked to Asn-78. N-linked (GlcNAc...) asparagine glycans are attached at residues Asn-218 and Asn-290. Cystine bridges form between Cys-268/Cys-316 and Cys-358/Cys-408. N-linked (GlcNAc...) asparagine glycans are attached at residues Asn-409, Asn-483, Asn-576, Asn-581, Asn-595, and Asn-692. Disulfide bonds link Cys-452-Cys-501 and Cys-543-Cys-592. 5 Fibronectin type-III domains span residues 625 to 720, 725 to 819, 824 to 926, 930 to 1026, and 1040 to 1132; these read PPLD…TKSA, NPSN…SGED, APGN…TPEG, PPSF…IMDE, and QPLY…TGPA. Polar residues predominate over residues 707–731; that stretch reads QPSEPSEQYLTKSANPDENPSNVQG. Residues 707–732 are disordered; it reads QPSEPSEQYLTKSANPDENPSNVQGI. 9 N-linked (GlcNAc...) asparagine glycosylation sites follow: Asn-778, Asn-834, Asn-885, Asn-969, Asn-985, Asn-995, Asn-1048, Asn-1059, and Asn-1091. A helical membrane pass occupies residues 1144–1166; it reads GWFIGLMCAVALLILILLIVCFI. Residues 1167–1284 are Cytoplasmic-facing; sequence RRNKGGKYPV…SPVNAMNSFV (118 aa). Basic and acidic residues-rich tracts occupy residues 1175 to 1195, 1202 to 1212, and 1221 to 1230; these read PVKE…KEDD, RSLESDAEDHK, and PSDRTVKKED. The disordered stretch occupies residues 1175–1284; the sequence is PVKEKEDAHA…SPVNAMNSFV (110 aa). Positions 1268–1284 are enriched in polar residues; it reads NESSEAPSPVNAMNSFV.

This sequence belongs to the immunoglobulin superfamily. L1/neurofascin/NgCAM family. In terms of assembly, heterodimer of an alpha and a beta chain. Retina and developing brain.

It is found in the cell membrane. Its function is as follows. This protein is a cell adhesion molecule involved in neuron-neuron adhesion, neurite fasciculation, outgrowth of neurites, etc. Specifically involved in the development of optic fibres in the retina. The polypeptide is Neuronal cell adhesion molecule (Gallus gallus (Chicken)).